We begin with the raw amino-acid sequence, 463 residues long: Interferon-inducible GTPase 5 (463 aa).

One can recognise an IRG-type G domain in the interval 52–234 (TRLEVGVTGE…PMLVTTWEHD (183 aa)). GTP contacts are provided by residues 61-68 (ESGAGKSS), 86-90 (TGVVE), 168-170 (KVD), and 215-217 (SNL). A phosphoserine mark is found at Ser246 and Ser303. The segment at 409-438 (QGEVSLEAAGDNAVEKRSSGEGTSEEAPLS) is disordered.

It belongs to the TRAFAC class dynamin-like GTPase superfamily. IRG family.

It is found in the cell projection. The protein localises to the cilium. The protein resides in the flagellum. It localises to the lipid droplet. It carries out the reaction GTP + H2O = GDP + phosphate + H(+). Required for sperm motility and therefore male fertility, via positive regulation of spermatozoa fibrous sheath formation. This Rattus norvegicus (Rat) protein is Interferon-inducible GTPase 5 (Irgc).